Here is a 237-residue protein sequence, read N- to C-terminus: Ribosomal RNA small subunit methyltransferase G (237 aa).

S-adenosyl-L-methionine-binding positions include glycine 78, phenylalanine 83, 129-130, and arginine 148; that span reads AE.

It belongs to the methyltransferase superfamily. RNA methyltransferase RsmG family.

It is found in the cytoplasm. Its function is as follows. Specifically methylates the N7 position of a guanine in 16S rRNA. This is Ribosomal RNA small subunit methyltransferase G from Clostridium kluyveri (strain ATCC 8527 / DSM 555 / NBRC 12016 / NCIMB 10680 / K1).